Here is a 540-residue protein sequence, read N- to C-terminus: MSKEIKFSSDARSAMVRGVDILADTVKVTLGPKGRNVVLEKSFGSPLITNDGVTIAKEIELEDHFENMGAKLVSEVASKTNDIAGDGTTTATVLTQAIVREGIKNVTAGANPIGIRRGIETAVAAAVEALKNNAIPVANKEAIAQVAAVSSRSEKVGEYISEAMEKVGKDGVITIEESRGMETELEVVEGMQFDRGYLSQYMVTDSEKMVADLENPYILITDKKISNIQEILPLLESILQSNRPLLIIADDVDGEALPTLVLNKIRGTFNVVAVKAPGFGDRRKAMLEDIAILTGGTVITEDLGLELKDATIEALGQAARVTVDKDSTVIVEGAGNPEAISHRVAVIKSQIETTTSEFDREKLQERLAKLSGGVAVIKVGAATETELKEMKLRIEDALNATRAAVEEGIVAGGGTALANVIPAVATLELTGDEATGRNIVLRALEEPVRQIAHNAGFEGSIVIDRLKNAELGIGFNAATGEWVNMIDQGIIDPVKVSRSALQNAASVASLILTTEAVVANKPEPVAPAPAMDPSMMGGMM.

Residues 29-32, 86-90, G413, 476-478, and D492 contribute to the ATP site; these read TLGP, DGTTT, and NAA.

Belongs to the chaperonin (HSP60) family. As to quaternary structure, forms a cylinder of 14 subunits composed of two heptameric rings stacked back-to-back. Interacts with the co-chaperonin GroES.

The protein resides in the cytoplasm. The enzyme catalyses ATP + H2O + a folded polypeptide = ADP + phosphate + an unfolded polypeptide.. Its function is as follows. Together with its co-chaperonin GroES, plays an essential role in assisting protein folding. The GroEL-GroES system forms a nano-cage that allows encapsulation of the non-native substrate proteins and provides a physical environment optimized to promote and accelerate protein folding. The polypeptide is Chaperonin GroEL (Streptococcus pneumoniae (strain ATCC 700669 / Spain 23F-1)).